A 215-amino-acid chain; its full sequence is Fanconi anemia core complex-associated protein 24 (215 aa).

The interval 160-215 (LRTVQQIPGVGKVKAPLLLQKFPSIQQLSNASIGELEQVVGQAVAQQIHAFFTQPR) is ruvA domain 2-like.

As to quaternary structure, belongs to the multisubunit FA complex composed of FANCA, FANCB, FANCC, FANCE, FANCF, FANCG, FANCL/PHF9, FANCM and FAAP24. Interacts with FANCM.

The protein localises to the nucleus. Its function is as follows. Plays a role in DNA repair through recruitment of the FA core complex to damaged DNA. Regulates FANCD2 monoubiquitination upon DNA damage. Induces chromosomal instability as well as hypersensitivity to DNA cross-linking agents, when repressed. Targets FANCM/FAAP24 complex to the DNA, preferentially to single strand DNA. This Homo sapiens (Human) protein is Fanconi anemia core complex-associated protein 24.